The sequence spans 725 residues: Aminopeptidase RNPEPL1 (725 aa).

326–330 lines the substrate pocket; the sequence is VAMEN. Residue histidine 353 coordinates Zn(2+). Glutamate 354 functions as the Proton acceptor in the catalytic mechanism. Residues histidine 357 and glutamate 376 each coordinate Zn(2+). The tract at residues 676 to 699 is disordered; that stretch reads GLGSSTEPASEPSTELGKAEADTD. The segment covering 679–690 has biased composition (low complexity); it reads SSTEPASEPSTE.

This sequence belongs to the peptidase M1 family. Requires Zn(2+) as cofactor. In terms of tissue distribution, ubiquitously expressed. Expressed at relatively higher levels in heart and skeletal muscle.

The enzyme catalyses Release of N-terminal amino acids, preferentially methionine, from peptides and arylamides.. Inhibited by calcium but not affected by chloride ions. Inhibited by amastatin and to a lower extent by bestatin. Weakly inhibited by puromycin. In terms of biological role, broad specificity aminopeptidase which preferentially hydrolyzes an N-terminal methionine, citrulline or glutamine. The protein is Aminopeptidase RNPEPL1 of Homo sapiens (Human).